A 277-amino-acid chain; its full sequence is Undecaprenyl-diphosphatase (277 aa).

The next 6 membrane-spanning stretches (helical) occupy residues Phe-47–Ile-67, Ala-85–Ile-105, Trp-108–Trp-128, Phe-187–Tyr-207, Val-218–Leu-238, and Phe-249–Ile-269.

It belongs to the UppP family.

The protein resides in the cell inner membrane. The enzyme catalyses di-trans,octa-cis-undecaprenyl diphosphate + H2O = di-trans,octa-cis-undecaprenyl phosphate + phosphate + H(+). Catalyzes the dephosphorylation of undecaprenyl diphosphate (UPP). Confers resistance to bacitracin. This is Undecaprenyl-diphosphatase from Pseudomonas aeruginosa (strain ATCC 15692 / DSM 22644 / CIP 104116 / JCM 14847 / LMG 12228 / 1C / PRS 101 / PAO1).